The following is a 106-amino-acid chain: Thiosulfate sulfurtransferase GlpE (106 aa).

The Rhodanese domain occupies arginine 16–valine 104. The Cysteine persulfide intermediate role is filled by cysteine 64.

This sequence belongs to the GlpE family.

It localises to the cytoplasm. The catalysed reaction is thiosulfate + hydrogen cyanide = thiocyanate + sulfite + 2 H(+). It carries out the reaction thiosulfate + [thioredoxin]-dithiol = [thioredoxin]-disulfide + hydrogen sulfide + sulfite + 2 H(+). Functionally, transferase that catalyzes the transfer of sulfur from thiosulfate to thiophilic acceptors such as cyanide or dithiols. May function in a CysM-independent thiosulfate assimilation pathway by catalyzing the conversion of thiosulfate to sulfite, which can then be used for L-cysteine biosynthesis. This chain is Thiosulfate sulfurtransferase GlpE, found in Pseudomonas syringae pv. syringae (strain B728a).